A 94-amino-acid polypeptide reads, in one-letter code: Co-chaperonin GroES (94 aa).

This sequence belongs to the GroES chaperonin family. Heptamer of 7 subunits arranged in a ring. Interacts with the chaperonin GroEL.

It is found in the cytoplasm. Together with the chaperonin GroEL, plays an essential role in assisting protein folding. The GroEL-GroES system forms a nano-cage that allows encapsulation of the non-native substrate proteins and provides a physical environment optimized to promote and accelerate protein folding. GroES binds to the apical surface of the GroEL ring, thereby capping the opening of the GroEL channel. In Ehrlichia chaffeensis (strain ATCC CRL-10679 / Arkansas), this protein is Co-chaperonin GroES.